The following is a 403-amino-acid chain: 8-amino-7-oxononanoate synthase (403 aa).

R22 provides a ligand contact to substrate. Residue 109-110 (GF) coordinates pyridoxal 5'-phosphate. Substrate is bound at residue H134. The pyridoxal 5'-phosphate site is built by S178, H206, and T232. An N6-(pyridoxal phosphate)lysine modification is found at K235. A substrate-binding site is contributed by T348. Residues 383 to 403 (SNDSGSKPSIESSFELKKEAQ) form a disordered region. A compositionally biased stretch (polar residues) spans 385–394 (DSGSKPSIES).

It belongs to the class-II pyridoxal-phosphate-dependent aminotransferase family. BioF subfamily. In terms of assembly, homodimer. The cofactor is pyridoxal 5'-phosphate.

It carries out the reaction 6-carboxyhexanoyl-[ACP] + L-alanine + H(+) = (8S)-8-amino-7-oxononanoate + holo-[ACP] + CO2. It participates in cofactor biosynthesis; biotin biosynthesis. Its function is as follows. Catalyzes the decarboxylative condensation of pimeloyl-[acyl-carrier protein] and L-alanine to produce 8-amino-7-oxononanoate (AON), [acyl-carrier protein], and carbon dioxide. In Vibrio atlanticus (strain LGP32) (Vibrio splendidus (strain Mel32)), this protein is 8-amino-7-oxononanoate synthase.